The chain runs to 318 residues: 4-hydroxy-3-methylbut-2-enyl diphosphate reductase (318 aa).

Cys12 is a [4Fe-4S] cluster binding site. His41 and His74 together coordinate (2E)-4-hydroxy-3-methylbut-2-enyl diphosphate. Dimethylallyl diphosphate contacts are provided by His41 and His74. Residues His41 and His74 each contribute to the isopentenyl diphosphate site. Residue Cys96 coordinates [4Fe-4S] cluster. His124 contributes to the (2E)-4-hydroxy-3-methylbut-2-enyl diphosphate binding site. His124 provides a ligand contact to dimethylallyl diphosphate. His124 serves as a coordination point for isopentenyl diphosphate. The active-site Proton donor is Glu126. Position 167 (Thr167) interacts with (2E)-4-hydroxy-3-methylbut-2-enyl diphosphate. [4Fe-4S] cluster is bound at residue Cys197. (2E)-4-hydroxy-3-methylbut-2-enyl diphosphate is bound by residues Ser225, Ser226, Asn227, and Ser269. Residues Ser225, Ser226, Asn227, and Ser269 each coordinate dimethylallyl diphosphate. 4 residues coordinate isopentenyl diphosphate: Ser225, Ser226, Asn227, and Ser269.

Belongs to the IspH family. [4Fe-4S] cluster is required as a cofactor.

The enzyme catalyses isopentenyl diphosphate + 2 oxidized [2Fe-2S]-[ferredoxin] + H2O = (2E)-4-hydroxy-3-methylbut-2-enyl diphosphate + 2 reduced [2Fe-2S]-[ferredoxin] + 2 H(+). It carries out the reaction dimethylallyl diphosphate + 2 oxidized [2Fe-2S]-[ferredoxin] + H2O = (2E)-4-hydroxy-3-methylbut-2-enyl diphosphate + 2 reduced [2Fe-2S]-[ferredoxin] + 2 H(+). The protein operates within isoprenoid biosynthesis; dimethylallyl diphosphate biosynthesis; dimethylallyl diphosphate from (2E)-4-hydroxy-3-methylbutenyl diphosphate: step 1/1. Its pathway is isoprenoid biosynthesis; isopentenyl diphosphate biosynthesis via DXP pathway; isopentenyl diphosphate from 1-deoxy-D-xylulose 5-phosphate: step 6/6. Its function is as follows. Catalyzes the conversion of 1-hydroxy-2-methyl-2-(E)-butenyl 4-diphosphate (HMBPP) into a mixture of isopentenyl diphosphate (IPP) and dimethylallyl diphosphate (DMAPP). Acts in the terminal step of the DOXP/MEP pathway for isoprenoid precursor biosynthesis. This chain is 4-hydroxy-3-methylbut-2-enyl diphosphate reductase, found in Francisella tularensis subsp. mediasiatica (strain FSC147).